Reading from the N-terminus, the 105-residue chain is Cyclotide vibi-E (105 aa).

A signal peptide spans Ala1 to Ala9. A propeptide spanning residues Ser10–Asn69 is cleaved from the precursor. Residues Gly70–Asn99 constitute a cross-link (cyclopeptide (Gly-Asn)). Disulfide bonds link Cys73–Cys90, Cys77–Cys92, and Cys82–Cys97. A propeptide spanning residues Ser100–Tyr105 is cleaved from the precursor.

In terms of processing, this is a cyclic peptide.

Functionally, probably participates in a plant defense mechanism. Has cytotoxic activity, active against a human lymphoma cell line with an IC(50) of 3.2 uM. This chain is Cyclotide vibi-E, found in Viola biflora (Yellow wood violet).